Reading from the N-terminus, the 257-residue chain is Staphylococcal secretory antigen SsaA (257 aa).

The N-terminal stretch at 1–26 is a signal peptide; it reads MKKIATATIATAGIATFAFAHHDAQA. 8 consecutive repeat copies span residues 73–75, 76–78, 84–86, 87–89, 90–92, 93–95, 96–98, and 99–101. Residues 73–101 form an 8 X 3 AA repeats of Y-[NS]-N region; sequence YNNYNNYNYYGYNNYSNYNNYSNYNNYNN. The disordered stretch occupies residues 101–144; it reads NYQSNNTQSQRTTQPTGGLGASYSTSSSNVHVTTTSAPSSNGVS. The segment covering 107–116 has biased composition (polar residues); it reads TQSQRTTQPT. Positions 122–136 are enriched in low complexity; it reads SYSTSSSNVHVTTTS. Residues 136-257 form the Peptidase C51 domain; sequence SAPSSNGVSL…SQAASYNYIH (122 aa).

The protein resides in the secreted. Its function is as follows. Not known; immunogenic protein expressed during sepsis and particularly during episodes of infective endocarditis. The polypeptide is Staphylococcal secretory antigen SsaA (ssaA) (Staphylococcus epidermidis).